Consider the following 520-residue polypeptide: GMP synthase [glutamine-hydrolyzing] (520 aa).

In terms of domain architecture, Glutamine amidotransferase type-1 spans Thr-9–Gly-202. Cys-86 functions as the Nucleophile in the catalytic mechanism. Catalysis depends on residues His-176 and Glu-178. The region spanning Trp-203 to Arg-395 is the GMPS ATP-PPase domain. Residue Ser-230–Ser-236 coordinates ATP.

In terms of assembly, homodimer.

The catalysed reaction is XMP + L-glutamine + ATP + H2O = GMP + L-glutamate + AMP + diphosphate + 2 H(+). It participates in purine metabolism; GMP biosynthesis; GMP from XMP (L-Gln route): step 1/1. Its function is as follows. Catalyzes the synthesis of GMP from XMP. The sequence is that of GMP synthase [glutamine-hydrolyzing] from Brucella melitensis biotype 2 (strain ATCC 23457).